The sequence spans 140 residues: ATP synthase epsilon chain 1 (140 aa).

It belongs to the ATPase epsilon chain family. As to quaternary structure, F-type ATPases have 2 components, CF(1) - the catalytic core - and CF(0) - the membrane proton channel. CF(1) has five subunits: alpha(3), beta(3), gamma(1), delta(1), epsilon(1). CF(0) has three main subunits: a, b and c.

It is found in the cell inner membrane. In terms of biological role, produces ATP from ADP in the presence of a proton gradient across the membrane. The polypeptide is ATP synthase epsilon chain 1 (Methylococcus capsulatus (strain ATCC 33009 / NCIMB 11132 / Bath)).